Reading from the N-terminus, the 64-residue chain is Large ribosomal subunit protein eL24 (64 aa).

Zn(2+) is bound by residues Cys-6, Cys-9, Cys-32, and Cys-36. A C4-type zinc finger spans residues 6 to 36; that stretch reads CNFCGKSIEPGTGKKFVKKDGSVMFICSSKC.

Belongs to the eukaryotic ribosomal protein eL24 family. As to quaternary structure, part of the 50S ribosomal subunit. Forms a cluster with proteins L3 and L14. Zn(2+) serves as cofactor.

In terms of biological role, binds to the 23S rRNA. This chain is Large ribosomal subunit protein eL24, found in Methanococcus aeolicus (strain ATCC BAA-1280 / DSM 17508 / OCM 812 / Nankai-3).